Consider the following 36-residue polypeptide: Pollen allergen Dac g 2 (36 aa).

Belongs to the expansin family. Expansin B subfamily.

It is found in the secreted. This Dactylis glomerata (Orchard grass) protein is Pollen allergen Dac g 2.